The primary structure comprises 72 residues: Translation initiation factor IF-1 (72 aa).

Residues 1 to 72 enclose the S1-like domain; it reads MAKEDSIEMQ…TKGRIIFRAR (72 aa).

The protein belongs to the IF-1 family. Component of the 30S ribosomal translation pre-initiation complex which assembles on the 30S ribosome in the order IF-2 and IF-3, IF-1 and N-formylmethionyl-tRNA(fMet); mRNA recruitment can occur at any time during PIC assembly.

The protein resides in the cytoplasm. Functionally, one of the essential components for the initiation of protein synthesis. Stabilizes the binding of IF-2 and IF-3 on the 30S subunit to which N-formylmethionyl-tRNA(fMet) subsequently binds. Helps modulate mRNA selection, yielding the 30S pre-initiation complex (PIC). Upon addition of the 50S ribosomal subunit IF-1, IF-2 and IF-3 are released leaving the mature 70S translation initiation complex. The protein is Translation initiation factor IF-1 of Actinobacillus succinogenes (strain ATCC 55618 / DSM 22257 / CCUG 43843 / 130Z).